The chain runs to 276 residues: Ribosomal RNA small subunit methyltransferase A (276 aa).

The S-adenosyl-L-methionine site is built by Asn27, Leu29, Gly54, Glu75, Asp101, and Asn123.

It belongs to the class I-like SAM-binding methyltransferase superfamily. rRNA adenine N(6)-methyltransferase family. RsmA subfamily.

It is found in the cytoplasm. It carries out the reaction adenosine(1518)/adenosine(1519) in 16S rRNA + 4 S-adenosyl-L-methionine = N(6)-dimethyladenosine(1518)/N(6)-dimethyladenosine(1519) in 16S rRNA + 4 S-adenosyl-L-homocysteine + 4 H(+). Specifically dimethylates two adjacent adenosines (A1518 and A1519) in the loop of a conserved hairpin near the 3'-end of 16S rRNA in the 30S particle. May play a critical role in biogenesis of 30S subunits. The sequence is that of Ribosomal RNA small subunit methyltransferase A from Bartonella henselae (strain ATCC 49882 / DSM 28221 / CCUG 30454 / Houston 1) (Rochalimaea henselae).